A 76-amino-acid polypeptide reads, in one-letter code: MRRERGRRARRRVCSFCVDKIEHVDYKDAARLKRYITERGKILPRRISGNCARHQRQLTVAIKRARIMALLPFTVE.

Belongs to the bacterial ribosomal protein bS18 family. Part of the 30S ribosomal subunit. Forms a tight heterodimer with protein bS6.

In terms of biological role, binds as a heterodimer with protein bS6 to the central domain of the 16S rRNA, where it helps stabilize the platform of the 30S subunit. The polypeptide is Small ribosomal subunit protein bS18 (Symbiobacterium thermophilum (strain DSM 24528 / JCM 14929 / IAM 14863 / T)).